Reading from the N-terminus, the 120-residue chain is Large ribosomal subunit protein uL18 (120 aa).

Belongs to the universal ribosomal protein uL18 family. In terms of assembly, part of the 50S ribosomal subunit; part of the 5S rRNA/L5/L18/L25 subcomplex. Contacts the 5S and 23S rRNAs.

This is one of the proteins that bind and probably mediate the attachment of the 5S RNA into the large ribosomal subunit, where it forms part of the central protuberance. This Rhodopseudomonas palustris (strain BisB18) protein is Large ribosomal subunit protein uL18.